Consider the following 260-residue polypeptide: UPF0246 protein Bcep18194_A5551 (260 aa).

This sequence belongs to the UPF0246 family.

This is UPF0246 protein Bcep18194_A5551 from Burkholderia lata (strain ATCC 17760 / DSM 23089 / LMG 22485 / NCIMB 9086 / R18194 / 383).